A 565-amino-acid polypeptide reads, in one-letter code: NAD-dependent malic enzyme (565 aa).

The active-site Proton donor is Tyr104. Arg157 contacts NAD(+). The active-site Proton acceptor is Lys175. Residues Glu246, Asp247, and Asp270 each contribute to the a divalent metal cation site. The NAD(+) site is built by Asp270 and Asn418.

It belongs to the malic enzymes family. In terms of assembly, homotetramer. Requires Mg(2+) as cofactor. Mn(2+) is required as a cofactor.

It carries out the reaction (S)-malate + NAD(+) = pyruvate + CO2 + NADH. It catalyses the reaction oxaloacetate + H(+) = pyruvate + CO2. In Escherichia coli O127:H6 (strain E2348/69 / EPEC), this protein is NAD-dependent malic enzyme.